Consider the following 609-residue polypeptide: Protein NRT1/ PTR FAMILY 7.1 (609 aa).

The next 2 membrane-spanning stretches (helical) occupy residues 67 to 87 (IILL…GVNL) and 109 to 129 (WTGT…SYWG). Thr-133 is modified (phosphothreonine). 10 helical membrane passes run 136–156 (IFQV…WFFL), 173–193 (SSLG…GYGG), 216–236 (FFSY…TILV), 243–263 (LWTE…VAFL), 367–387 (PIWL…SLFV), 402–422 (IPAA…TGIY), 438–458 (MGIG…TEIQ), 474–494 (ILWQ…MYVG), 516–536 (MASM…VMAI), and 559–579 (FYFL…IFAK).

It belongs to the major facilitator superfamily. Proton-dependent oligopeptide transporter (POT/PTR) (TC 2.A.17) family. As to expression, expressed in flowers.

It is found in the membrane. The protein is Protein NRT1/ PTR FAMILY 7.1 (NPF7.1) of Arabidopsis thaliana (Mouse-ear cress).